We begin with the raw amino-acid sequence, 260 residues long: Diphthine synthase (260 aa).

S-adenosyl-L-methionine contacts are provided by residues Leu-9, Asp-85, Ile-88, 113 to 114, Leu-168, Ala-202, and His-227; that span reads TA.

It belongs to the diphthine synthase family. As to quaternary structure, homodimer.

The catalysed reaction is 2-[(3S)-amino-3-carboxypropyl]-L-histidyl-[translation elongation factor 2] + 3 S-adenosyl-L-methionine = diphthine-[translation elongation factor 2] + 3 S-adenosyl-L-homocysteine + 3 H(+). It functions in the pathway protein modification; peptidyl-diphthamide biosynthesis. Its function is as follows. S-adenosyl-L-methionine-dependent methyltransferase that catalyzes the trimethylation of the amino group of the modified target histidine residue in translation elongation factor 2 (EF-2), to form an intermediate called diphthine. The three successive methylation reactions represent the second step of diphthamide biosynthesis. In Haloquadratum walsbyi (strain DSM 16790 / HBSQ001), this protein is Diphthine synthase.